Here is a 363-residue protein sequence, read N- to C-terminus: Methyltransferase pynC (363 aa).

S-adenosyl-L-methionine-binding positions include 199-200, D225, 254-255, R270, and R271; these read GG and SF.

This sequence belongs to the class I-like SAM-binding methyltransferase superfamily. Cation-independent O-methyltransferase family.

The protein operates within secondary metabolite biosynthesis. Its function is as follows. Methyltransferase; part of the gene cluster that mediates the biosynthesis of pyranonigrins, a family of antioxidative compounds. The first step of pyranonigrins biosynthesis is performed by the hybrid PKS-NRPS synthetase that condenses 6 malonyl-CoA units to an acetyl starter unit, to form a 1,3,5-trioxotetradecane-6,8-dienyl-ACP. The enoyl reductase (ER) domain of pynA is likely to be functional during the first two rounds of polyketide chain extension, to generate the saturated C-C bonds of the alkyl side chain. PynA subsequently forms the amide bond between the acyl chain and L-serine. Although pynA has a terminal reductase domain, it appears to require the thioesterase pynI for the release of the straight-chain intermediate from pynA via the formation of a tetramic acid pyranonigrin J. The methyltransferase pynC then coverts pyranonigrin J to pyranonigrin I via N-methylation. The FAD-dependent monooxygenase pynG catalyzes an epoxidation-mediated cyclization to form the dihydro-gamma-pyrone moiety, followed by pynD-catalyzed oxidation of the alcohol to the ketone and enolization to yield the characteristic tetramic acid-fused gamma-pyrone core of pyranonigrin H. Pyranonigrin H is substrate of pynH for dehydration-mediated exo-methylene formation from the serine side chain to produce pyranonigrin E, before the oxidase pynE reduces the exo-methylene of pyranonigrin E into a pendant methyl to form pyranonigrin G. The FAD-linked oxidoreductase pynB performs the reverse reaction and converts pyranonigrin G back to pyranonigrin E. The protein is Methyltransferase pynC of Aspergillus niger (strain ATCC MYA-4892 / CBS 513.88 / FGSC A1513).